A 265-amino-acid chain; its full sequence is NAD kinase 1 (265 aa).

Aspartate 45 acts as the Proton acceptor in catalysis. Residues 45-46, 122-123, arginine 148, aspartate 150, and alanine 185 contribute to the NAD(+) site; these read DG and NE.

The protein belongs to the NAD kinase family. A divalent metal cation serves as cofactor.

Its subcellular location is the cytoplasm. It carries out the reaction NAD(+) + ATP = ADP + NADP(+) + H(+). Involved in the regulation of the intracellular balance of NAD and NADP, and is a key enzyme in the biosynthesis of NADP. Catalyzes specifically the phosphorylation on 2'-hydroxyl of the adenosine moiety of NAD to yield NADP. The polypeptide is NAD kinase 1 (Bacillus anthracis).